Consider the following 223-residue polypeptide: Kinetochore protein Spc25 (223 aa).

Positions 51-116 form a coiled coil; sequence RHQRKVGKLQ…QRKNEIMERI (66 aa).

Belongs to the SPC25 family. Component of the Ndc80 complex, which is composed of Ndc80, Nuf2 and Spc25.

It localises to the nucleus. It is found in the chromosome. The protein resides in the centromere. The protein localises to the kinetochore. In terms of biological role, acts as a component of the essential kinetochore-associated Ndc80 complex, which is required for chromosome segregation and spindle checkpoint activity during meiosis and mitosis. Required for kinetochore integrity and the organization of stable microtubule binding sites in the outer plate of the kinetochore. Participates in SAC signaling that responds specifically to disruptions in spindle microtubule dynamics. The NDC80 complex synergistically enhances the affinity of the SKA1 complex for microtubules and may allow the NDC80 complex to track depolymerizing microtubules. This Drosophila yakuba (Fruit fly) protein is Kinetochore protein Spc25.